The following is a 488-amino-acid chain: N-succinylglutamate 5-semialdehyde dehydrogenase (488 aa).

221-226 (GSSRTG) contributes to the NAD(+) binding site. Catalysis depends on residues E244 and C278.

The protein belongs to the aldehyde dehydrogenase family. AstD subfamily.

It catalyses the reaction N-succinyl-L-glutamate 5-semialdehyde + NAD(+) + H2O = N-succinyl-L-glutamate + NADH + 2 H(+). It functions in the pathway amino-acid degradation; L-arginine degradation via AST pathway; L-glutamate and succinate from L-arginine: step 4/5. Functionally, catalyzes the NAD-dependent reduction of succinylglutamate semialdehyde into succinylglutamate. This chain is N-succinylglutamate 5-semialdehyde dehydrogenase, found in Pseudomonas fluorescens (strain Pf0-1).